The sequence spans 657 residues: Filensin (657 aa).

The head stretch occupies residues 1-38; it reads MYRSSFLREVRKEKYERSDAYDELRGSPEFDSLAQAQG. An IF rod domain is found at 38–318; it reads GLENLQELNE…RIIENEDSRL (281 aa). The segment at 39–73 is coil 1A; that stretch reads LENLQELNERFASYINRARVLEQRNTILRKQLETF. The segment at 74 to 82 is linker 1; sequence QRMDELVGL. The interval 83–182 is coil 1B; sequence DEAFAGQIEF…RYKKNLMEIQ (100 aa). The interval 183–199 is linker 12; the sequence is TYVNILQQIIQTTPRVS. The coil 2 stretch occupies residues 200–318; sequence PITTGISEEK…RIIENEDSRL (119 aa). The segment at 319–657 is tail; that stretch reads NSAIAGTPVT…SKKKPGDKGS (339 aa). 2 disordered regions span residues 503 to 530 and 565 to 593; these read IGGD…ICER and PDVS…TDHD. Residues 519–530 are compositionally biased toward basic and acidic residues; it reads PSEKEKRDICER.

It belongs to the intermediate filament family. Detected in eye lens fiber cells (at protein level). Detected in embryonic eye lens.

It localises to the cell membrane. It is found in the cytoplasm. Its subcellular location is the cytoskeleton. The protein resides in the cell cortex. In terms of biological role, required for the correct formation of lens intermediate filaments. The polypeptide is Filensin (BFSP1) (Gallus gallus (Chicken)).